A 442-amino-acid chain; its full sequence is Endothelin receptor type B (442 aa).

A signal peptide spans 1 to 26 (MQSSASRCGRALVALLLACGLLGVWG). Over 27–101 (EKRGFPPAQA…RKIEINKTFK (75 aa)) the chain is Extracellular. Asn-60 and Asn-97 each carry an N-linked (GlcNAc...) asparagine glycan. The helical transmembrane segment at 102 to 126 (YINTIVSCLVFVLGIIGNSTLLRII) threads the bilayer. Topologically, residues 127-137 (YKNKCMRNGPN) are cytoplasmic. The helical transmembrane segment at 138-163 (ILIASLALGDLLHIIIDIPINAYKLL) threads the bilayer. Residues 164 to 175 (AGDWPFGAEMCK) lie on the Extracellular side of the membrane. A disulfide bridge links Cys-174 with Cys-255. Residues 176-197 (LVPFIQKASVGITVLSLCALSI) traverse the membrane as a helical segment. Topologically, residues 198 to 218 (DRYRAVASWSRIKGIGVPKWT) are cytoplasmic. Residues 219–243 (AVEIVLIWVVSVVLAVPEAIGFDVI) traverse the membrane as a helical segment. At 244 to 271 (TSDYKGKPLRVCMLNPFQKTAFMQFYKT) the chain is on the extracellular side. A helical transmembrane segment spans residues 272-296 (AKDWWLFSFYFCLPLAITAIFYTLM). The Cytoplasmic segment spans residues 297 to 324 (TCEMLRKKSGMQIALNDHLKQRREVAKT). Phosphoserine is present on Ser-305. A helical transmembrane segment spans residues 325–350 (VFCLVLVFALCWLPLHLSRILKLTLY). The Extracellular segment spans residues 351-362 (DQSNPQRCELLS). The chain crosses the membrane as a helical span at residues 363–389 (FLLVLDYIGINMASLNSCINPIALYLV). Over 390-442 (SKRFKNCFKSCLCCWCQTFEEKQSLEEKQSCLKFKANDHGYDNFRSSNKYSSS) the chain is Cytoplasmic. Residues Cys-402, Cys-403, and Cys-405 are each lipidated (S-palmitoyl cysteine). Ser-419 bears the Phosphoserine mark. Tyr-439 is modified (phosphotyrosine). Phosphoserine is present on residues Ser-440, Ser-441, and Ser-442.

The protein belongs to the G-protein coupled receptor 1 family. Endothelin receptor subfamily. EDNRB sub-subfamily. Widely distributed in cell types of a variety of tissues.

Its subcellular location is the cell membrane. In terms of biological role, non-specific receptor for endothelin 1, 2, and 3. Mediates its action by association with G proteins that activate a phosphatidylinositol-calcium second messenger system. The sequence is that of Endothelin receptor type B from Rattus norvegicus (Rat).